The sequence spans 371 residues: Chaperone protein DnaJ (371 aa).

In terms of domain architecture, J spans 5–69 (DYYEVLGLSK…QKRAQYDQFG (65 aa)). The segment at 133–215 (GKELNVEIPV…CHGSGKVRKR (83 aa)) adopts a CR-type zinc-finger fold. Residues cysteine 146, cysteine 149, cysteine 163, cysteine 166, cysteine 189, cysteine 192, cysteine 203, and cysteine 206 each coordinate Zn(2+). 4 CXXCXGXG motif repeats span residues 146–153 (CDTCKGSG), 163–170 (CKHCSGSG), 189–196 (CGHCSGTG), and 203–210 (CTTCHGSG).

The protein belongs to the DnaJ family. Homodimer. Zn(2+) is required as a cofactor.

It is found in the cytoplasm. In terms of biological role, participates actively in the response to hyperosmotic and heat shock by preventing the aggregation of stress-denatured proteins and by disaggregating proteins, also in an autonomous, DnaK-independent fashion. Unfolded proteins bind initially to DnaJ; upon interaction with the DnaJ-bound protein, DnaK hydrolyzes its bound ATP, resulting in the formation of a stable complex. GrpE releases ADP from DnaK; ATP binding to DnaK triggers the release of the substrate protein, thus completing the reaction cycle. Several rounds of ATP-dependent interactions between DnaJ, DnaK and GrpE are required for fully efficient folding. Also involved, together with DnaK and GrpE, in the DNA replication of plasmids through activation of initiation proteins. This chain is Chaperone protein DnaJ, found in Bacillus cereus (strain ATCC 10987 / NRS 248).